We begin with the raw amino-acid sequence, 405 residues long: Acetate kinase (405 aa).

Asn7 is a Mg(2+) binding site. ATP is bound at residue Lys14. Arg98 lines the substrate pocket. Catalysis depends on Asp156, which acts as the Proton donor/acceptor. Residues 215–219, 290–292, and 338–342 each bind ATP; these read HLGNG, DLR, and GVGEN. Position 391 (Glu391) interacts with Mg(2+).

The protein belongs to the acetokinase family. Homodimer. It depends on Mg(2+) as a cofactor. Mn(2+) is required as a cofactor.

It localises to the cytoplasm. It catalyses the reaction acetate + ATP = acetyl phosphate + ADP. It participates in metabolic intermediate biosynthesis; acetyl-CoA biosynthesis; acetyl-CoA from acetate: step 1/2. Functionally, catalyzes the formation of acetyl phosphate from acetate and ATP. Can also catalyze the reverse reaction. The protein is Acetate kinase of Gloeobacter violaceus (strain ATCC 29082 / PCC 7421).